A 596-amino-acid polypeptide reads, in one-letter code: DNA polymerase kappa (596 aa).

The UmuC domain maps to 85–320 (CVCIDMDAYF…LPIRKVGGIG (236 aa)). Mg(2+) contacts are provided by D89 and D180. E181 is an active-site residue. The UBZ4-type zinc-finger motif lies at 516–545 (TRPCPICGTDVENRLDVMNCHVDECILKVQ). Residues C519, C522, H536, and C540 each coordinate Zn(2+). The tract at residues 559-584 (NKSTQKPERPSTKKRKLQEKRPKAKK) is disordered. Positions 570–584 (TKKRKLQEKRPKAKK) are enriched in basic residues.

It belongs to the DNA polymerase type-Y family. Mg(2+) serves as cofactor. Mn(2+) is required as a cofactor.

The protein localises to the nucleus. The enzyme catalyses DNA(n) + a 2'-deoxyribonucleoside 5'-triphosphate = DNA(n+1) + diphosphate. DNA polymerase specifically involved in DNA repair. Plays an important role in translesion synthesis, where the normal high-fidelity DNA polymerases cannot proceed and DNA synthesis stalls. Depending on the context, it inserts the correct base, but causes frequent base transitions, transversions and frameshifts. Lacks 3'-5' proofreading exonuclease activity. Forms a Schiff base with 5'-deoxyribose phosphate at abasic sites, but does not have lyase activity. In Caenorhabditis elegans, this protein is DNA polymerase kappa (polk-1).